Here is a 278-residue protein sequence, read N- to C-terminus: Protoheme IX farnesyltransferase (278 aa).

9 helical membrane-spanning segments follow: residues 12-32 (VIWL…GTVD), 36-56 (LAAL…FNHY), 72-92 (PLPA…ALSA), 105-124 (LPGV…YTVW), 130-150 (WLNI…GYAL), 157-177 (LPAV…IWAL), 204-224 (AIIS…YLVF), 228-248 (LPGL…SALA), and 257-277 (MWRM…ALVF).

The protein belongs to the UbiA prenyltransferase family. Protoheme IX farnesyltransferase subfamily.

It localises to the cell membrane. The catalysed reaction is heme b + (2E,6E)-farnesyl diphosphate + H2O = Fe(II)-heme o + diphosphate. It participates in porphyrin-containing compound metabolism; heme O biosynthesis; heme O from protoheme: step 1/1. Functionally, converts heme B (protoheme IX) to heme O by substitution of the vinyl group on carbon 2 of heme B porphyrin ring with a hydroxyethyl farnesyl side group. The polypeptide is Protoheme IX farnesyltransferase (Pyrobaculum neutrophilum (strain DSM 2338 / JCM 9278 / NBRC 100436 / V24Sta) (Thermoproteus neutrophilus)).